The sequence spans 141 residues: Hemoglobin subunit alpha (141 aa).

In terms of domain architecture, Globin spans 1–141; it reads VLSSKDKTNV…VSTVLTSKYR (141 aa). S3 bears the Phosphoserine mark. K7 is modified (N6-succinyllysine). Position 8 is a phosphothreonine (T8). At K11 the chain carries N6-succinyllysine. An N6-acetyllysine; alternate modification is found at K16. K16 is modified (N6-succinyllysine; alternate). Y24 is modified (phosphotyrosine). K40 is modified (N6-succinyllysine). S49 carries the phosphoserine modification. H58 is a binding site for O2. Heme b is bound at residue H87. S102 carries the phosphoserine modification. T108 is subject to Phosphothreonine. Residue S124 is modified to Phosphoserine. T134 and T137 each carry phosphothreonine. Phosphoserine is present on S138.

It belongs to the globin family. As to quaternary structure, heterotetramer of two alpha chains and two beta chains. In terms of tissue distribution, red blood cells.

Involved in oxygen transport from the lung to the various peripheral tissues. In terms of biological role, hemopressin acts as an antagonist peptide of the cannabinoid receptor CNR1. Hemopressin-binding efficiently blocks cannabinoid receptor CNR1 and subsequent signaling. This Camelus dromedarius (Dromedary) protein is Hemoglobin subunit alpha (HBA).